Consider the following 408-residue polypeptide: Putative F-box protein At1g53550 (408 aa).

The 46-residue stretch at 29–74 (TCYFDPIPVDLVINILSRLSLECIARCRCVSKLWSSIIRRPNYNQL) folds into the F-box domain.

This Arabidopsis thaliana (Mouse-ear cress) protein is Putative F-box protein At1g53550.